The primary structure comprises 345 residues: N(4)-(Beta-N-acetylglucosaminyl)-L-asparaginase (345 aa).

An N-terminal signal peptide occupies residues 1–23 (MARKWNLPFLLLPLVLGIPLVRG). An N-linked (GlcNAc...) asparagine glycan is attached at Asn-38. A disulfide bond links Cys-64 and Cys-69. A glycan (N-linked (GlcNAc...) asparagine) is linked at Asn-149. Cys-163 and Cys-179 are joined by a disulfide. The active-site Nucleophile is Thr-205. Substrate-binding positions include 233–236 (RVGD) and 256–259 (TGDG). Cys-285 and Cys-305 are oxidised to a cystine. Residue Asn-307 is glycosylated (N-linked (GlcNAc...) asparagine). Cysteines 316 and 344 form a disulfide.

It belongs to the Ntn-hydrolase family. Heterotetramer of two alpha and two beta chains arranged as a dimer of alpha/beta heterodimers. N-glycosylated. In terms of processing, cleaved into an alpha and beta chain by autocatalysis; this activates the enzyme. The N-terminal residue of the beta subunit is responsible for the nucleophile hydrolase activity.

It is found in the lysosome. It catalyses the reaction N(4)-(beta-N-acetyl-D-glucosaminyl)-L-asparagine + H2O = N-acetyl-beta-D-glucosaminylamine + L-aspartate + H(+). In terms of biological role, cleaves the GlcNAc-Asn bond which joins oligosaccharides to the peptide of asparagine-linked glycoproteins. This is N(4)-(Beta-N-acetylglucosaminyl)-L-asparaginase (Aga) from Rattus norvegicus (Rat).